We begin with the raw amino-acid sequence, 434 residues long: Chaperone SurA (434 aa).

The first 22 residues, 1–22 (MKHSKKIVTALLALAMSQTVMA), serve as a signal peptide directing secretion. 2 PpiC domains span residues 173-274 (EVEF…KVMD) and 283-383 (VEEV…QLMD).

Its subcellular location is the periplasm. The enzyme catalyses [protein]-peptidylproline (omega=180) = [protein]-peptidylproline (omega=0). Chaperone involved in the correct folding and assembly of outer membrane proteins. Recognizes specific patterns of aromatic residues and the orientation of their side chains, which are found more frequently in integral outer membrane proteins. May act in both early periplasmic and late outer membrane-associated steps of protein maturation. The polypeptide is Chaperone SurA (Shewanella denitrificans (strain OS217 / ATCC BAA-1090 / DSM 15013)).